A 419-amino-acid chain; its full sequence is Serine--tRNA ligase (419 aa).

226–228 (TSE) serves as a coordination point for L-serine. ATP-binding positions include 257 to 259 (RRE) and Val273. Residue Glu280 coordinates L-serine. Position 344-347 (344-347 (ELTS)) interacts with ATP. Thr379 is a binding site for L-serine.

Belongs to the class-II aminoacyl-tRNA synthetase family. Type-1 seryl-tRNA synthetase subfamily. Homodimer. The tRNA molecule binds across the dimer.

The protein localises to the cytoplasm. The enzyme catalyses tRNA(Ser) + L-serine + ATP = L-seryl-tRNA(Ser) + AMP + diphosphate + H(+). The catalysed reaction is tRNA(Sec) + L-serine + ATP = L-seryl-tRNA(Sec) + AMP + diphosphate + H(+). Its pathway is aminoacyl-tRNA biosynthesis; selenocysteinyl-tRNA(Sec) biosynthesis; L-seryl-tRNA(Sec) from L-serine and tRNA(Sec): step 1/1. Its function is as follows. Catalyzes the attachment of serine to tRNA(Ser). Is also able to aminoacylate tRNA(Sec) with serine, to form the misacylated tRNA L-seryl-tRNA(Sec), which will be further converted into selenocysteinyl-tRNA(Sec). The protein is Serine--tRNA ligase of Mycobacterium tuberculosis (strain CDC 1551 / Oshkosh).